Reading from the N-terminus, the 240-residue chain is Uridylate kinase (240 aa).

13–16 (KISG) is an ATP binding site. G55 lines the UMP pocket. 2 residues coordinate ATP: G56 and R60. Residues D75 and 136-143 (TGNPFFTT) each bind UMP. Residues T163, Q164, Y169, and D172 each coordinate ATP.

It belongs to the UMP kinase family. As to quaternary structure, homohexamer.

It localises to the cytoplasm. The catalysed reaction is UMP + ATP = UDP + ADP. The protein operates within pyrimidine metabolism; CTP biosynthesis via de novo pathway; UDP from UMP (UMPK route): step 1/1. Its activity is regulated as follows. Inhibited by UTP. Functionally, catalyzes the reversible phosphorylation of UMP to UDP. The protein is Uridylate kinase of Paramagnetospirillum magneticum (strain ATCC 700264 / AMB-1) (Magnetospirillum magneticum).